We begin with the raw amino-acid sequence, 160 residues long: Allophycocyanin alpha chain (160 aa).

At asparagine 70 the chain carries N4-methylasparagine. Cysteine 80 contacts (2R,3E)-phycocyanobilin.

This sequence belongs to the phycobiliprotein family. In terms of assembly, component of the phycobilisome. Heterodimer of an alpha and a beta chain. Contains one covalently linked phycocyanobilin chromophore.

It is found in the cellular thylakoid membrane. Light-harvesting photosynthetic bile pigment-protein from the phycobiliprotein complex. Allophycocyanin has a maximum absorption at approximately 650 nanometers. This chain is Allophycocyanin alpha chain (apcA), found in Mastigocladus laminosus (Fischerella sp.).